The following is a 552-amino-acid chain: Keratin, type II cytoskeletal 6A (552 aa).

Polar residues predominate over residues 1–14; the sequence is MSTKTVIRSQTSHR. The interval 1–21 is disordered; it reads MSTKTVIRSQTSHRGFSAGSA. The interval 1–151 is head; sequence MSTKTVIRSQ…DPTIQRVRTE (151 aa). The segment at 152-187 is coil 1A; sequence EREQIKTLNNKFASFIDKVRFLEQQNKVLDTKWALL. An IF rod domain is found at 152–465; the sequence is EREQIKTLNN…TLLEGEECRL (314 aa). Residues 188–206 are linker 1; sequence QEQGTKTVRQGLETLFEQY. The interval 207 to 298 is coil 1B; it reads INDLRKELDN…ALYEAELSQM (92 aa). The segment at 299–322 is linker 12; sequence QTHISDTSVVLSMDNNRSLDLDSI. Residues 323–461 form a coil 2 region; sequence IAEVKAQYEE…ATYRTLLEGE (139 aa). The segment at 462-552 is tail; that stretch reads ECRLNGEGVG…TSSTRKSYRP (91 aa). The segment at 524–552 is disordered; sequence ISSGLSSSGGSSSTIKYTTTSSTRKSYRP. Low complexity predominate over residues 525-552; sequence SSGLSSSGGSSSTIKYTTTSSTRKSYRP.

It belongs to the intermediate filament family. In terms of assembly, heterodimer of a type I and a type II keratin. KRT6 isomers associate with KRT16 and/or KRT17. Interacts with TCHP.

Functionally, epidermis-specific type I keratin involved in wound healing. Involved in the activation of follicular keratinocytes after wounding, while it does not play a major role in keratinocyte proliferation or migration. Participates in the regulation of epithelial migration by inhibiting the activity of SRC during wound repair. In Rattus norvegicus (Rat), this protein is Keratin, type II cytoskeletal 6A (Krt6a).